The primary structure comprises 106 residues: Large ribosomal subunit protein eL42 (106 aa).

Belongs to the eukaryotic ribosomal protein eL42 family.

The polypeptide is Large ribosomal subunit protein eL42 (RPL44) (Wickerhamomyces ciferrii (strain ATCC 14091 / BCRC 22168 / CBS 111 / JCM 3599 / NBRC 0793 / NRRL Y-1031 F-60-10) (Yeast)).